The sequence spans 153 residues: Fimbrial protein EcpC (153 aa).

Residues 1–8 constitute a propeptide, leader sequence; sequence MLKQVQKG. Phe-9 is modified (N-methylphenylalanine). A helical transmembrane segment spans residues 9–29; it reads FTLIELMIVIAIIGILAAIAL. Cys-130 and Cys-143 are joined by a disulfide.

Belongs to the N-Me-Phe pilin family.

Its subcellular location is the fimbrium. The protein localises to the membrane. The polypeptide is Fimbrial protein EcpC (ecpC) (Eikenella corrodens).